We begin with the raw amino-acid sequence, 55 residues long: MFRLGVFLLTFLLLVSMATSEYSRGRIMARASECVNECVESGHNTFHCERHCSNT.

The N-terminal stretch at 1-20 is a signal peptide; that stretch reads MFRLGVFLLTFLLLVSMATS. Cystine bridges form between Cys34–Cys48 and Cys38–Cys52.

Expressed by the venom duct.

The protein resides in the secreted. Probable neurotoxin. In Californiconus californicus (California cone), this protein is Conotoxin Cal14.14.